The sequence spans 341 residues: L-threonine 3-dehydrogenase (341 aa).

Cys-38 serves as a coordination point for Zn(2+). Active-site charge relay system residues include Thr-40 and His-43. 6 residues coordinate Zn(2+): His-63, Glu-64, Cys-93, Cys-96, Cys-99, and Cys-107. Residues Ile-175, Asp-195, Arg-200, 262–264 (LGI), and 286–287 (IY) each bind NAD(+).

It belongs to the zinc-containing alcohol dehydrogenase family. Homotetramer. Requires Zn(2+) as cofactor.

It is found in the cytoplasm. It catalyses the reaction L-threonine + NAD(+) = (2S)-2-amino-3-oxobutanoate + NADH + H(+). The protein operates within amino-acid degradation; L-threonine degradation via oxydo-reductase pathway; glycine from L-threonine: step 1/2. Catalyzes the NAD(+)-dependent oxidation of L-threonine to 2-amino-3-ketobutyrate. The protein is L-threonine 3-dehydrogenase of Shigella sonnei (strain Ss046).